Consider the following 600-residue polypeptide: Aspartate--tRNA(Asp/Asn) ligase (600 aa).

Glutamate 175 contributes to the L-aspartate binding site. An aspartate region spans residues 199–202; sequence QLFK. Arginine 221 provides a ligand contact to L-aspartate. Residues 221-223 and glutamine 230 each bind ATP; that span reads RDE. Residue histidine 453 coordinates L-aspartate. Glutamate 487 provides a ligand contact to ATP. Arginine 494 provides a ligand contact to L-aspartate. ATP is bound at residue 539–542; it reads GWDR. Residues 578-600 form a disordered region; the sequence is AAQRKESGIDFKPKKGPQGQKEK. Positions 580–590 are enriched in basic and acidic residues; it reads QRKESGIDFKP.

The protein belongs to the class-II aminoacyl-tRNA synthetase family. Type 1 subfamily. As to quaternary structure, homodimer.

The protein localises to the cytoplasm. The catalysed reaction is tRNA(Asx) + L-aspartate + ATP = L-aspartyl-tRNA(Asx) + AMP + diphosphate. Aspartyl-tRNA synthetase with relaxed tRNA specificity since it is able to aspartylate not only its cognate tRNA(Asp) but also tRNA(Asn). Reaction proceeds in two steps: L-aspartate is first activated by ATP to form Asp-AMP and then transferred to the acceptor end of tRNA(Asp/Asn). The polypeptide is Aspartate--tRNA(Asp/Asn) ligase (Corynebacterium jeikeium (strain K411)).